A 66-amino-acid chain; its full sequence is Prokaryotic ubiquitin-like protein UBact (66 aa).

The segment at 1-66 (MNMRYTLMPE…AERYRQRTGE (66 aa)) is disordered. Residues 30-66 (GGPRRPETGSPDKDNLLKRMRKVDPKQAERYRQRTGE) are compositionally biased toward basic and acidic residues. Residue E66 forms an Isoglutamyl lysine isopeptide (Glu-Lys) (interchain with K-? in acceptor proteins) linkage.

This sequence belongs to the ubiquitin-like protein UBact family.

May function as a protein modifier covalently attached to lysine residues of substrate proteins. This may serve to target the modified proteins for degradation by proteasomes. The sequence is that of Prokaryotic ubiquitin-like protein UBact from Nitrospira moscoviensis.